We begin with the raw amino-acid sequence, 443 residues long: Probable D-serine dehydratase (443 aa).

At Lys116 the chain carries N6-(pyridoxal phosphate)lysine.

The protein belongs to the serine/threonine dehydratase family. DsdA subfamily. Pyridoxal 5'-phosphate is required as a cofactor.

The enzyme catalyses D-serine = pyruvate + NH4(+). This is Probable D-serine dehydratase from Bacillus cereus (strain G9842).